The following is a 142-amino-acid chain: Small heat shock protein IbpB (142 aa).

In terms of domain architecture, sHSP spans 26–137; sequence AGESQSFPPY…AAQRIAISER (112 aa).

The protein belongs to the small heat shock protein (HSP20) family. Homodimer. Forms homomultimers of about 100-150 subunits at optimal growth temperatures. Conformation changes to oligomers at high temperatures or high ionic concentrations. The decrease in size of the multimers is accompanied by an increase in chaperone activity.

The protein resides in the cytoplasm. Functionally, associates with aggregated proteins, together with IbpA, to stabilize and protect them from irreversible denaturation and extensive proteolysis during heat shock and oxidative stress. Aggregated proteins bound to the IbpAB complex are more efficiently refolded and reactivated by the ATP-dependent chaperone systems ClpB and DnaK/DnaJ/GrpE. Its activity is ATP-independent. This Shigella flexneri serotype 5b (strain 8401) protein is Small heat shock protein IbpB.